The following is a 366-amino-acid chain: MAP kinase-activated protein kinase 2 (366 aa).

The 262-residue stretch at lysine 30–isoleucine 291 folds into the Protein kinase domain. ATP is bound by residues leucine 36–valine 44 and lysine 59. Glutamate 105 to leucine 107 serves as a coordination point for staurosporine. The Proton acceptor role is filled by aspartate 152. Threonine 188 is subject to Phosphothreonine; by MAPK14. The residue at position 238 (serine 238) is a Phosphoserine; by MAPK14. Position 294 is a phosphoserine; by autocatalysis (serine 294). Residues serine 294 to arginine 330 are autoinhibitory helix. Threonine 300 is modified (phosphothreonine; by MAPK14). A Glycyl lysine isopeptide (Lys-Gly) (interchain with G-Cter in SUMO) cross-link involves residue lysine 319. The Nuclear export signal (NES) motif lies at methionine 322–valine 331. The interval aspartate 332–alanine 356 is p38 MAPK-binding site. 2 consecutive short sequence motifs (bipartite nuclear localization signal) follow at residues lysine 337 to lysine 340 and lysine 351 to lysine 355.

It belongs to the protein kinase superfamily. CAMK Ser/Thr protein kinase family. As to quaternary structure, heterodimer with p38-alpha/MAPK14; this heterodimer forms a stable complex: molecules are positioned 'face to face' so that the ATP-binding sites of both kinases are at the heterodimer interface. Interacts with PHC2. Interacts with HSF1. Sumoylation inhibits the protein kinase activity. Post-translationally, phosphorylated and activated by MAP kinase p38-alpha/MAPK14 at Thr-188, Ser-238 and Thr-300.

The protein localises to the cytoplasm. The protein resides in the nucleus. It carries out the reaction L-seryl-[protein] + ATP = O-phospho-L-seryl-[protein] + ADP + H(+). The catalysed reaction is L-threonyl-[protein] + ATP = O-phospho-L-threonyl-[protein] + ADP + H(+). Its activity is regulated as follows. Activated following phosphorylation by p38-alpha/MAPK14 following various stresses. Inhibited following sumoylation. Specifically inhibited by pyrrolopyridine inhibitors. In terms of biological role, stress-activated serine/threonine-protein kinase involved in cytokine production, endocytosis, reorganization of the cytoskeleton, cell migration, cell cycle control, chromatin remodeling, DNA damage response and transcriptional regulation. Following stress, it is phosphorylated and activated by MAP kinase p38-alpha/MAPK14, leading to phosphorylation of substrates. Phosphorylates serine in the peptide sequence, Hyd-X-R-X(2)-S, where Hyd is a large hydrophobic residue. Phosphorylates ALOX5, CDC25B, CDC25C, CEP131, ELAVL1, HNRNPA0, HSP27/HSPB1, KRT18, KRT20, LIMK1, LSP1, PABPC1, PARN, PDE4A, RCSD1, RPS6KA3, TAB3 and TTP/ZFP36. Phosphorylates HSF1; leading to the interaction with HSP90 proteins and inhibiting HSF1 homotrimerization, DNA-binding and transactivation activities. Mediates phosphorylation of HSP27/HSPB1 in response to stress, leading to dissociation of HSP27/HSPB1 from large small heat-shock protein (sHsps) oligomers and impairment of their chaperone activities and ability to protect against oxidative stress effectively. Involved in inflammatory response by regulating tumor necrosis factor (TNF) and IL6 production post-transcriptionally: acts by phosphorylating AU-rich elements (AREs)-binding proteins ELAVL1, HNRNPA0, PABPC1 and TTP/ZFP36, leading to regulate the stability and translation of TNF and IL6 mRNAs. Phosphorylation of TTP/ZFP36, a major post-transcriptional regulator of TNF, promotes its binding to 14-3-3 proteins and reduces its ARE mRNA affinity leading to inhibition of dependent degradation of ARE-containing transcripts. Phosphorylates CEP131 in response to cellular stress following ultraviolet irradiation which promotes binding of CEP131 to 14-3-3 proteins and inhibits formation of novel centriolar satellites. Also involved in late G2/M checkpoint following DNA damage through a process of post-transcriptional mRNA stabilization: following DNA damage, relocalizes from nucleus to cytoplasm and phosphorylates HNRNPA0 and PARN, leading to stabilization of GADD45A mRNA. Involved in toll-like receptor signaling pathway (TLR) in dendritic cells: required for acute TLR-induced macropinocytosis by phosphorylating and activating RPS6KA3. The sequence is that of MAP kinase-activated protein kinase 2 (MAPKAPK2) from Oryctolagus cuniculus (Rabbit).